The following is a 424-amino-acid chain: Histidine--tRNA ligase (424 aa).

This sequence belongs to the class-II aminoacyl-tRNA synthetase family. Homodimer.

The protein resides in the cytoplasm. The catalysed reaction is tRNA(His) + L-histidine + ATP = L-histidyl-tRNA(His) + AMP + diphosphate + H(+). In Shigella sonnei (strain Ss046), this protein is Histidine--tRNA ligase.